A 667-amino-acid polypeptide reads, in one-letter code: NADPH--cytochrome P450 reductase (667 aa).

The Lumenal portion of the chain corresponds to 1–8 (MEILESID). Residues 9–29 (FIEVLILDNLGAIIIVAVIVG) traverse the membrane as a helical segment. At 30–667 (TYLYMNKPPP…HGRYLQDVWF (638 aa)) the chain is on the cytoplasmic side. The 144-residue stretch at 72-215 (MKIFFGTQTR…DFNRWKKDMW (144 aa)) folds into the Flavodoxin-like domain. FMN is bound by residues 164-173 (LGNKTYEHYN) and D199. The 235-residue stretch at 277–511 (KNPYYAEVLE…FVRESHFKLP (235 aa)) folds into the FAD-binding FR-type domain. R297 is a binding site for NADP(+). Residues 468 to 470 (TSV) and 484 to 487 (GVAS) each bind FAD. NADP(+)-binding positions include T527, 586–587 (SR), and 592–596 (KVYVQ). W666 is an FAD binding site.

This sequence belongs to the NADPH--cytochrome P450 reductase family. In the N-terminal section; belongs to the flavodoxin family. The protein in the C-terminal section; belongs to the flavoprotein pyridine nucleotide cytochrome reductase family. The cofactor is FAD. Requires FMN as cofactor.

The protein localises to the endoplasmic reticulum membrane. The enzyme catalyses 2 oxidized [cytochrome P450] + NADPH = 2 reduced [cytochrome P450] + NADP(+) + H(+). This enzyme is required for electron transfer from NADP to cytochrome P450 in microsomes. It can also provide electron transfer to heme oxygenase and cytochrome B5. In Dictyostelium discoideum (Social amoeba), this protein is NADPH--cytochrome P450 reductase (redB).